We begin with the raw amino-acid sequence, 397 residues long: t-SNARE affecting a late Golgi compartment protein 2 (397 aa).

Topologically, residues 1 to 317 are cytoplasmic; sequence MFRDRTNLFL…HYQKRTQKCK (317 aa). The stretch at 74 to 96 forms a coiled coil; that stretch reads DIAQDVDDYLLEVRRLSEQLAKV. Phosphoserine is present on Ser-109. The t-SNARE coiled-coil homology domain occupies 244–306; sequence EAYLRERDEE…KSADKELNKA (63 aa). Residues 318-338 form a helical; Anchor for type IV membrane protein membrane-spanning segment; it reads VILLLTLCVIALFFFVMLKPH. Residues 339–397 lie on the Vesicular side of the membrane; that stretch reads GGGSGGRNNGSNKYNNDDNKTVNNSHDDGSNTHINDEESNLPSIVEVTESENDALDDLL. The segment at 341-397 is disordered; the sequence is GSGGRNNGSNKYNNDDNKTVNNSHDDGSNTHINDEESNLPSIVEVTESENDALDDLL. A compositionally biased stretch (basic and acidic residues) spans 353 to 374; sequence NNDDNKTVNNSHDDGSNTHIND. Acidic residues predominate over residues 386 to 397; it reads TESENDALDDLL.

It belongs to the syntaxin family. In terms of assembly, interacts with VPS45.

It is found in the golgi apparatus. The protein localises to the trans-Golgi network membrane. The protein resides in the endosome membrane. Its function is as follows. t-SNARE that functions in transport from the endosome to the late Golgi and on the endocytic pathway. This Saccharomyces cerevisiae (strain ATCC 204508 / S288c) (Baker's yeast) protein is t-SNARE affecting a late Golgi compartment protein 2 (TLG2).